The chain runs to 780 residues: Chromatin structure-remodeling complex subunit rsc9 (780 aa).

In terms of domain architecture, ARID spans threonine 20 to histidine 112. The residue at position 230 (threonine 230) is a Phosphothreonine. Positions serine 530–lysine 609 form a DNA-binding region, RFX-type winged-helix. Serine 696 bears the Phosphoserine mark.

It belongs to the RSC9 family. As to quaternary structure, component of the RSC complex composed of at least arp9, arp42, rsc1, rsc4, rsc7, rsc9, rsc58, sfh1, snf21, ssr1, ssr2, ssr3 and ssr4. The complex interacts with histone and histone variant components of centromeric chromatin.

Its subcellular location is the cytoplasm. The protein localises to the nucleus. Component of the chromatin structure remodeling complex (RSC), which is involved in transcription regulation and nucleosome positioning. Controls particularly membrane and organelle development genes. In Schizosaccharomyces pombe (strain 972 / ATCC 24843) (Fission yeast), this protein is Chromatin structure-remodeling complex subunit rsc9 (rsc9).